The chain runs to 346 residues: Protein Spea_1705 (346 aa).

The active-site Proton acceptor is Cys101. Residues 102–103 (GH), Asp262, and 267–268 (GT) contribute to the substrate site.

This sequence belongs to the proline racemase family.

It carries out the reaction trans-3-hydroxy-L-proline = 1-pyrroline-2-carboxylate + H2O. Its function is as follows. In vitro, catalyzes the dehydration of trans-3-hydroxy-L-proline (t3LHyp) to Delta(1)-pyrroline-2-carboxylate (Pyr2C), albeit with very low efficiency. The physiological substrate may be different. Displays neither trans-4-hydroxy-L-proline (t4LHyp) epimerase nor proline racemase activity. In Shewanella pealeana (strain ATCC 700345 / ANG-SQ1), this protein is Protein Spea_1705.